The primary structure comprises 389 residues: Flap endonuclease 1 (389 aa).

Positions 1–105 are N-domain; the sequence is MGIKGLTALM…GELAKRKDKR (105 aa). Asp34 contributes to the Mg(2+) binding site. DNA is bound at residue Arg71. Residues Asp87, Glu159, Glu161, Asp180, and Asp182 each contribute to the Mg(2+) site. The interval 123–254 is I-domain; it reads EVEKLSKRTV…KTALKLIKEH (132 aa). Residue Glu159 coordinates DNA. Gly232 and Asp234 together coordinate DNA. Asp234 lines the Mg(2+) pocket. Residues 338–346 form an interaction with PCNA region; the sequence is SQNRLESFF. The disordered stretch occupies residues 356 to 389; the sequence is IGKRKVEEKKGKNGKAGLANKKSKGVSGFRRSKN.

It belongs to the XPG/RAD2 endonuclease family. FEN1 subfamily. Interacts with PCNA. Three molecules of FEN1 bind to one PCNA trimer with each molecule binding to one PCNA monomer. PCNA stimulates the nuclease activity without altering cleavage specificity. The cofactor is Mg(2+). Phosphorylated. Phosphorylation upon DNA damage induces relocalization to the nuclear plasma.

It localises to the nucleus. It is found in the nucleolus. Its subcellular location is the nucleoplasm. The protein localises to the mitochondrion. Functionally, structure-specific nuclease with 5'-flap endonuclease and 5'-3' exonuclease activities involved in DNA replication and repair. During DNA replication, cleaves the 5'-overhanging flap structure that is generated by displacement synthesis when DNA polymerase encounters the 5'-end of a downstream Okazaki fragment. It enters the flap from the 5'-end and then tracks to cleave the flap base, leaving a nick for ligation. Also involved in the long patch base excision repair (LP-BER) pathway, by cleaving within the apurinic/apyrimidinic (AP) site-terminated flap. Acts as a genome stabilization factor that prevents flaps from equilibrating into structures that lead to duplications and deletions. Also possesses 5'-3' exonuclease activity on nicked or gapped double-stranded DNA, and exhibits RNase H activity. Also involved in replication and repair of rDNA and in repairing mitochondrial DNA. This Ostreococcus lucimarinus (strain CCE9901) protein is Flap endonuclease 1.